Consider the following 250-residue polypeptide: Triosephosphate isomerase (250 aa).

9 to 11 (NWK) lines the substrate pocket. H94 (electrophile) is an active-site residue. The active-site Proton acceptor is the E166. Substrate-binding positions include G172, S211, and 232 to 233 (GG).

It belongs to the triosephosphate isomerase family. As to quaternary structure, homodimer.

It is found in the cytoplasm. The enzyme catalyses D-glyceraldehyde 3-phosphate = dihydroxyacetone phosphate. It participates in carbohydrate biosynthesis; gluconeogenesis. The protein operates within carbohydrate degradation; glycolysis; D-glyceraldehyde 3-phosphate from glycerone phosphate: step 1/1. Its function is as follows. Involved in the gluconeogenesis. Catalyzes stereospecifically the conversion of dihydroxyacetone phosphate (DHAP) to D-glyceraldehyde-3-phosphate (G3P). The chain is Triosephosphate isomerase from Methylococcus capsulatus (strain ATCC 33009 / NCIMB 11132 / Bath).